Consider the following 336-residue polypeptide: N-acetyl-gamma-glutamyl-phosphate reductase (336 aa).

Cys143 is a catalytic residue.

It belongs to the NAGSA dehydrogenase family. Type 1 subfamily.

Its subcellular location is the cytoplasm. The enzyme catalyses N-acetyl-L-glutamate 5-semialdehyde + phosphate + NADP(+) = N-acetyl-L-glutamyl 5-phosphate + NADPH + H(+). The protein operates within amino-acid biosynthesis; L-arginine biosynthesis; N(2)-acetyl-L-ornithine from L-glutamate: step 3/4. In terms of biological role, catalyzes the NADPH-dependent reduction of N-acetyl-5-glutamyl phosphate to yield N-acetyl-L-glutamate 5-semialdehyde. This is N-acetyl-gamma-glutamyl-phosphate reductase from Dictyoglomus thermophilum (strain ATCC 35947 / DSM 3960 / H-6-12).